The primary structure comprises 243 residues: Large ribosomal subunit protein uL2 (243 aa).

Disordered stretches follow at residues 1–23 and 204–243; these read MGKR…PSHR and PFGG…GGRR. A compositionally biased stretch (basic residues) spans 228 to 243; that stretch reads KVGHIAARKTGRGGRR.

The protein belongs to the universal ribosomal protein uL2 family. In terms of assembly, part of the 50S ribosomal subunit. Forms a bridge to the 30S subunit in the 70S ribosome.

Functionally, one of the primary rRNA binding proteins. Required for association of the 30S and 50S subunits to form the 70S ribosome, for tRNA binding and peptide bond formation. It has been suggested to have peptidyltransferase activity; this is somewhat controversial. Makes several contacts with the 16S rRNA in the 70S ribosome. In Methanopyrus kandleri (strain AV19 / DSM 6324 / JCM 9639 / NBRC 100938), this protein is Large ribosomal subunit protein uL2.